The following is a 279-amino-acid chain: 4-hydroxy-3-methylbut-2-enyl diphosphate reductase (279 aa).

C12 provides a ligand contact to [4Fe-4S] cluster. Residues H41 and H74 each contribute to the (2E)-4-hydroxy-3-methylbut-2-enyl diphosphate site. Residues H41 and H74 each coordinate dimethylallyl diphosphate. Positions 41 and 74 each coordinate isopentenyl diphosphate. C96 lines the [4Fe-4S] cluster pocket. H124 contacts (2E)-4-hydroxy-3-methylbut-2-enyl diphosphate. H124 serves as a coordination point for dimethylallyl diphosphate. H124 contacts isopentenyl diphosphate. The active-site Proton donor is E126. Residue T164 coordinates (2E)-4-hydroxy-3-methylbut-2-enyl diphosphate. Position 192 (C192) interacts with [4Fe-4S] cluster. (2E)-4-hydroxy-3-methylbut-2-enyl diphosphate is bound by residues S220, S221, N222, and S263. 4 residues coordinate dimethylallyl diphosphate: S220, S221, N222, and S263. Residues S220, S221, N222, and S263 each contribute to the isopentenyl diphosphate site.

This sequence belongs to the IspH family. The cofactor is [4Fe-4S] cluster.

The enzyme catalyses isopentenyl diphosphate + 2 oxidized [2Fe-2S]-[ferredoxin] + H2O = (2E)-4-hydroxy-3-methylbut-2-enyl diphosphate + 2 reduced [2Fe-2S]-[ferredoxin] + 2 H(+). It carries out the reaction dimethylallyl diphosphate + 2 oxidized [2Fe-2S]-[ferredoxin] + H2O = (2E)-4-hydroxy-3-methylbut-2-enyl diphosphate + 2 reduced [2Fe-2S]-[ferredoxin] + 2 H(+). It participates in isoprenoid biosynthesis; dimethylallyl diphosphate biosynthesis; dimethylallyl diphosphate from (2E)-4-hydroxy-3-methylbutenyl diphosphate: step 1/1. It functions in the pathway isoprenoid biosynthesis; isopentenyl diphosphate biosynthesis via DXP pathway; isopentenyl diphosphate from 1-deoxy-D-xylulose 5-phosphate: step 6/6. Functionally, catalyzes the conversion of 1-hydroxy-2-methyl-2-(E)-butenyl 4-diphosphate (HMBPP) into a mixture of isopentenyl diphosphate (IPP) and dimethylallyl diphosphate (DMAPP). Acts in the terminal step of the DOXP/MEP pathway for isoprenoid precursor biosynthesis. The sequence is that of 4-hydroxy-3-methylbut-2-enyl diphosphate reductase from Clostridioides difficile (strain 630) (Peptoclostridium difficile).